Reading from the N-terminus, the 349-residue chain is Transcription repressor OFP5 (349 aa).

Disordered stretches follow at residues 1–20, 29–94, and 143–183; these read MMRW…GLSR, KLSG…KESN, and KQRC…GYSR. The span at 10–20 shows a compositional bias: low complexity; the sequence is VSSSSSSGLSR. A compositionally biased stretch (basic and acidic residues) spans 37-48; sequence KPAKEKKQDEKA. Residues 49–62 show a composition bias toward polar residues; it reads SQNISVKTSLSSTT. Composition is skewed to basic and acidic residues over residues 63-94 and 143-167; these read RRSD…KESN and KQRC…DAGV. Positions 286-345 constitute an OVATE domain; that stretch reads VVKCSSDPQKDFRDSMIEMIMENGINHPEELKELLVCYLRLNTDEYHDMIISVFQQVHND.

In terms of assembly, interacts with BLH1, BLH2, BLH3, BLH4, BLH6 and BLH10. As to expression, expressed in roots, rosette and cauline leaves, and flower buds.

It localises to the nucleus. Functionally, transcriptional repressor that regulates multiple aspects of plant growth and development through the regulation of BEL1-LIKE (BLH) and KNOX TALE (KNAT) homeodomain transcription factors. Required for embryo development. The polypeptide is Transcription repressor OFP5 (OFP5) (Arabidopsis thaliana (Mouse-ear cress)).